We begin with the raw amino-acid sequence, 61 residues long: Small ribosomal subunit protein uS14 (61 aa).

Residues C24, C27, C40, and C43 each contribute to the Zn(2+) site.

Belongs to the universal ribosomal protein uS14 family. Zinc-binding uS14 subfamily. As to quaternary structure, part of the 30S ribosomal subunit. Contacts proteins S3 and S10. Zn(2+) serves as cofactor.

In terms of biological role, binds 16S rRNA, required for the assembly of 30S particles and may also be responsible for determining the conformation of the 16S rRNA at the A site. The chain is Small ribosomal subunit protein uS14 from Chloroflexus aurantiacus (strain ATCC 29364 / DSM 637 / Y-400-fl).